The sequence spans 192 residues: GTP cyclohydrolase-2 (192 aa).

50-54 (RLHSE) serves as a coordination point for GTP. 3 residues coordinate Zn(2+): C55, C66, and C68. Residues 92-94 (EGR) and T114 contribute to the GTP site. D126 acts as the Proton acceptor in catalysis. R128 functions as the Nucleophile in the catalytic mechanism. GTP-binding residues include T149 and K154.

The protein belongs to the GTP cyclohydrolase II family. It depends on Zn(2+) as a cofactor.

The enzyme catalyses GTP + 4 H2O = 2,5-diamino-6-hydroxy-4-(5-phosphoribosylamino)-pyrimidine + formate + 2 phosphate + 3 H(+). The protein operates within cofactor biosynthesis; riboflavin biosynthesis; 5-amino-6-(D-ribitylamino)uracil from GTP: step 1/4. Functionally, catalyzes the conversion of GTP to 2,5-diamino-6-ribosylamino-4(3H)-pyrimidinone 5'-phosphate (DARP), formate and pyrophosphate. The chain is GTP cyclohydrolase-2 from Helicobacter pylori (strain P12).